Here is a 266-residue protein sequence, read N- to C-terminus: Beta-lactamase OXA-10 (266 aa).

Positions 1-19 (MKTFAAYVIIACLSSTALA) are cleaved as a signal peptide. Cys44 and Cys51 are joined by a disulfide. Ser67 functions as the Acyl-ester intermediate in the catalytic mechanism. Position 70 is an N6-carboxylysine (Lys70). A beta-lactam-binding residues include Ser115, Thr206, Phe208, and Arg250.

This sequence belongs to the class-D beta-lactamase family. Dimer.

The protein localises to the periplasm. It catalyses the reaction a beta-lactam + H2O = a substituted beta-amino acid. Its activity is regulated as follows. Activated, with respect to most beta-lactam substrates, in the presence of 0.05 M sodium bicarbonate. Its function is as follows. Class D beta-lactamase which confers resistance to the beta-lactam antibiotics, including penicillin, carbenicillin and oxacillin, and also some cephalosporins. Confers weak resistance to some carbapenems, in E.coli strain C600Z1. Acts via hydrolysis of the beta-lactam ring. Has penicillin- and cephalosporin-hydrolyzing activities. The polypeptide is Beta-lactamase OXA-10 (Pseudomonas aeruginosa).